A 733-amino-acid polypeptide reads, in one-letter code: Leucine-rich repeat neuronal protein 4 (733 aa).

Positions 1–19 are cleaved as a signal peptide; the sequence is MRWTLMLQLLQLLLQLLMA. The Extracellular segment spans residues 20–676; sequence QSQSLERISQ…CATFTTKPSS (657 aa). LRR repeat units follow at residues 62–82, 83–106, 107–128, 130–151, 154–175, 178–199, 207–230, 231–253, 256–278, and 281–302; these read GVTTLNLANRSLESLPSCLPR, TLRSLDGSHNLLRALSEPVLGRLP, ELRVLTLHHNRISVLHWGRDTL, ELRELDLSHNLLTELPPCAGPS, SLRSLALAGNPLRALLPRTFAC, ALRLLNLSCSELGHIAQEAFAG, ALELLDLSGTSLERVESGWIRNLP, KLKSLFLRKMPRLKTLEGDIFKM, NLRQLDCGDSPALTSVHTEIFQD, and NLQVLQFQNCNLSSFGPWNSSQ. Asparagine 70 carries N-linked (GlcNAc...) asparagine glycosylation. N-linked (GlcNAc...) asparagine glycosylation is present at asparagine 183. N-linked (GlcNAc...) asparagine glycosylation is found at asparagine 291, asparagine 299, asparagine 327, asparagine 408, and asparagine 469. Positions 311–364 constitute an LRRCT domain; the sequence is NPLICSCELAWLLVDVNKTVLHRAADTMCEPALGSTGPFSGPLSLSHLSNVCRS. The segment at 395 to 423 is disordered; that stretch reads STALSAQPGGSQQNITKVPSLTMTSPTQG. The disordered stretch occupies residues 480–518; it reads KYLEPLPTSPNPRSLPQTKQRTQATPRALHTDPPQDEIP. Polar residues predominate over residues 490-504; the sequence is NPRSLPQTKQRTQAT. The 100-residue stretch at 576–675 folds into the Fibronectin type-III domain; the sequence is TPDPPTLQGV…SCATFTTKPS (100 aa). The N-linked (GlcNAc...) asparagine glycan is linked to asparagine 619. The helical transmembrane segment at 677–697 threads the bilayer; that stretch reads VVIFWGLCTASGLLLVSTLVL. The Cytoplasmic segment spans residues 698-733; it reads SVCLWRQRWKPHRQFYDTHLVAFKNPARAEEVTQWE.

Its subcellular location is the membrane. Its function is as follows. May play an important role in hippocampus-dependent long-lasting memory. This is Leucine-rich repeat neuronal protein 4 (Lrrn4) from Mus musculus (Mouse).